We begin with the raw amino-acid sequence, 255 residues long: Chlorocatechol 1,2-dioxygenase (255 aa).

The Fe cation site is built by Tyr130, Tyr164, His188, and His190.

The protein belongs to the intradiol ring-cleavage dioxygenase family. Requires Fe(3+) as cofactor.

The catalysed reaction is 3,5-dichlorocatechol + O2 = (2E,4E)-2,4-dichloromuconate + 2 H(+). The protein operates within aromatic compound metabolism; 3-chlorocatechol degradation. Functionally, preferentially converts 3,5-dichlorocatechol as opposed to other chlorinated catechols. Retains diminished activity toward non-chlorinated substrates. The protein is Chlorocatechol 1,2-dioxygenase (tfdC) of Burkholderia cepacia (Pseudomonas cepacia).